The following is a 73-amino-acid chain: Gene 30 protein (73 aa).

The region spanning 12 to 66 (LEKAINAVGGSQKVLAEKVGVTPQAINMLKKRGGSLPVTKMRKYEEVTGLPREVL) is the HTH cro/C1-type domain. A DNA-binding region (H-T-H motif) is located at residues 23–42 (QKVLAEKVGVTPQAINMLKK).

This chain is Gene 30 protein (30), found in Escherichia coli (Bacteriophage phi-80).